The following is a 271-amino-acid chain: 4,5-DOPA dioxygenase extradiol (271 aa).

Zn(2+) is bound by residues His22, His57, His177, and His234.

This sequence belongs to the DODA-type extradiol aromatic ring-opening dioxygenase family. In terms of assembly, monomer. It depends on Zn(2+) as a cofactor.

Its subcellular location is the cytoplasm. It carries out the reaction L-dopa + O2 = 4-(L-alanin-3-yl)-2-hydroxy-cis,cis-muconate 6-semialdehyde + H(+). Its function is as follows. In vitro, opens the cyclic ring of dihydroxy-phenylalanine (DOPA) between carbons 4 and 5, thus producing an unstable seco-DOPA that rearranges nonenzymatically to betalamic acid. The physiological substrate is unknown. The sequence is that of 4,5-DOPA dioxygenase extradiol (ygiD) from Escherichia coli (strain K12).